Here is a 274-residue protein sequence, read N- to C-terminus: Ubiquinone biosynthesis protein COQ4 homolog, mitochondrial (274 aa).

The transit peptide at 1–20 (MLRQTAFRSMKLNRTPGRYF) directs the protein to the mitochondrion. The tract at residues 13-40 (NRTPGRYFTTAENMDTGSSQSPPDTEQK) is disordered. The segment covering 22-36 (TAENMDTGSSQSPPD) has biased composition (polar residues). His177, Asp178, His181, and Glu193 together coordinate Zn(2+).

Belongs to the COQ4 family. Component of a multi-subunit COQ enzyme complex. Zn(2+) is required as a cofactor.

The protein resides in the mitochondrion inner membrane. It carries out the reaction a 4-hydroxy-3-methoxy-5-(all-trans-polyprenyl)benzoate + H(+) = a 2-methoxy-6-(all-trans-polyprenyl)phenol + CO2. It participates in cofactor biosynthesis; ubiquinone biosynthesis. Functionally, lyase that catalyzes the C1-decarboxylation of 4-hydroxy-3-methoxy-5-(all-trans-polyprenyl)benzoic acid into 2-methoxy-6-(all-trans-polyprenyl)phenol during ubiquinone biosynthesis. This Aedes aegypti (Yellowfever mosquito) protein is Ubiquinone biosynthesis protein COQ4 homolog, mitochondrial.